Consider the following 367-residue polypeptide: 4-hydroxy-3-methylbut-2-en-1-yl diphosphate synthase (flavodoxin) (367 aa).

4 residues coordinate [4Fe-4S] cluster: C270, C273, C305, and E312.

It belongs to the IspG family. It depends on [4Fe-4S] cluster as a cofactor.

It carries out the reaction (2E)-4-hydroxy-3-methylbut-2-enyl diphosphate + oxidized [flavodoxin] + H2O + 2 H(+) = 2-C-methyl-D-erythritol 2,4-cyclic diphosphate + reduced [flavodoxin]. Its pathway is isoprenoid biosynthesis; isopentenyl diphosphate biosynthesis via DXP pathway; isopentenyl diphosphate from 1-deoxy-D-xylulose 5-phosphate: step 5/6. Converts 2C-methyl-D-erythritol 2,4-cyclodiphosphate (ME-2,4cPP) into 1-hydroxy-2-methyl-2-(E)-butenyl 4-diphosphate. The polypeptide is 4-hydroxy-3-methylbut-2-en-1-yl diphosphate synthase (flavodoxin) (Buchnera aphidicola subsp. Schizaphis graminum (strain Sg)).